We begin with the raw amino-acid sequence, 90 residues long: PqqA binding protein 2 (90 aa).

It belongs to the PqqD family. In terms of assembly, monomer. Interacts with PqqE.

Its pathway is cofactor biosynthesis; pyrroloquinoline quinone biosynthesis. Functions as a PqqA binding protein and presents PqqA to PqqE, in the pyrroloquinoline quinone (PQQ) biosynthetic pathway. The protein is PqqA binding protein 2 (pqqD2) of Pseudomonas putida (strain ATCC 47054 / DSM 6125 / CFBP 8728 / NCIMB 11950 / KT2440).